Reading from the N-terminus, the 550-residue chain is Formin-binding protein 1-like (550 aa).

Residues 1-263 (MSWGTELWDQ…AAKSVDERRD (263 aa)) form the F-BAR domain. 2 coiled-coil regions span residues 66–258 (FTSC…AKSV) and 334–426 (LEDF…QRSE). Residues 339 to 416 (HLPPEQRRKR…IHKNEAWLSE (78 aa)) form the REM-1 domain. The span at 423–432 (QRSERRHSAE) shows a compositional bias: basic and acidic residues. Residues 423–467 (QRSERRHSAEANHLVAQGRESPEGSYTEDANQEGRVQPQPHAHPE) are disordered. The 62-residue stretch at 479–540 (PAIGHCKSLY…PTSYIDITLE (62 aa)) folds into the SH3 domain.

It belongs to the FNBP1 family. In terms of assembly, homodimerizes, the dimers can polymerize end-to-end to form filamentous structures. Interacts with GTP-bound cdc42 and wasl/n-wasp.

It is found in the cytoplasm. The protein localises to the cytoskeleton. It localises to the cell cortex. Its subcellular location is the cytoplasmic vesicle. The protein resides in the cell membrane. Its function is as follows. Required to coordinate membrane tubulation with reorganization of the actin cytoskeleton during endocytosis. Promotes cdc42-induced actin polymerization by activating the wasl-waspip complex, the predominant form of wasl/n-wasp in cells. Essential for autophagy of intracellular bacterial pathogens. The sequence is that of Formin-binding protein 1-like (fnbp1l) from Xenopus tropicalis (Western clawed frog).